Consider the following 361-residue polypeptide: Phosphoserine aminotransferase (361 aa).

Position 43 (Arg43) interacts with L-glutamate. Pyridoxal 5'-phosphate-binding positions include 77 to 78, Trp103, Thr153, Asp172, and Gln195; that span reads AS. Lys196 bears the N6-(pyridoxal phosphate)lysine mark. 237–238 provides a ligand contact to pyridoxal 5'-phosphate; it reads NT.

The protein belongs to the class-V pyridoxal-phosphate-dependent aminotransferase family. SerC subfamily. In terms of assembly, homodimer. It depends on pyridoxal 5'-phosphate as a cofactor.

It localises to the cytoplasm. The enzyme catalyses O-phospho-L-serine + 2-oxoglutarate = 3-phosphooxypyruvate + L-glutamate. It catalyses the reaction 4-(phosphooxy)-L-threonine + 2-oxoglutarate = (R)-3-hydroxy-2-oxo-4-phosphooxybutanoate + L-glutamate. It participates in amino-acid biosynthesis; L-serine biosynthesis; L-serine from 3-phospho-D-glycerate: step 2/3. It functions in the pathway cofactor biosynthesis; pyridoxine 5'-phosphate biosynthesis; pyridoxine 5'-phosphate from D-erythrose 4-phosphate: step 3/5. Functionally, catalyzes the reversible conversion of 3-phosphohydroxypyruvate to phosphoserine and of 3-hydroxy-2-oxo-4-phosphonooxybutanoate to phosphohydroxythreonine. This chain is Phosphoserine aminotransferase, found in Desulfotalea psychrophila (strain LSv54 / DSM 12343).